Reading from the N-terminus, the 349-residue chain is tRNA pseudouridine synthase D (349 aa).

Position 27 (Phe-27) interacts with substrate. Residue Asp-80 is the Nucleophile of the active site. Substrate is bound at residue Asn-129. Residues 155-303 (GVPNYFGAQR…VEAARRAMLL (149 aa)) form the TRUD domain. Residue Phe-329 coordinates substrate.

This sequence belongs to the pseudouridine synthase TruD family.

It carries out the reaction uridine(13) in tRNA = pseudouridine(13) in tRNA. Functionally, responsible for synthesis of pseudouridine from uracil-13 in transfer RNAs. The chain is tRNA pseudouridine synthase D from Shigella sonnei (strain Ss046).